A 183-amino-acid chain; its full sequence is Putative manganese efflux pump MntP (183 aa).

6 helical membrane passes run 6-26 (LFLI…CIGL), 40-60 (IYFG…GFLF), 64-84 (IATM…IIMI), 101-121 (MNII…FTAL), 135-155 (LFIG…SKYL), and 158-178 (IDVI…FFGL).

It belongs to the MntP (TC 9.B.29) family.

The protein resides in the cell membrane. Functionally, probably functions as a manganese efflux pump. The polypeptide is Putative manganese efflux pump MntP (Clostridium tetani (strain Massachusetts / E88)).